Consider the following 251-residue polypeptide: Triosephosphate isomerase (251 aa).

Asn-9–Lys-11 is a binding site for substrate. Catalysis depends on His-96, which acts as the Electrophile. Residue Glu-167 is the Proton acceptor of the active site. Substrate contacts are provided by residues Gly-173, Ser-213, and Gly-234 to Gly-235.

Belongs to the triosephosphate isomerase family. Homodimer.

The protein localises to the cytoplasm. The catalysed reaction is D-glyceraldehyde 3-phosphate = dihydroxyacetone phosphate. Its pathway is carbohydrate biosynthesis; gluconeogenesis. It participates in carbohydrate degradation; glycolysis; D-glyceraldehyde 3-phosphate from glycerone phosphate: step 1/1. Functionally, involved in the gluconeogenesis. Catalyzes stereospecifically the conversion of dihydroxyacetone phosphate (DHAP) to D-glyceraldehyde-3-phosphate (G3P). The polypeptide is Triosephosphate isomerase (Phocaeicola vulgatus (strain ATCC 8482 / DSM 1447 / JCM 5826 / CCUG 4940 / NBRC 14291 / NCTC 11154) (Bacteroides vulgatus)).